The primary structure comprises 491 residues: UDP-N-acetylmuramate--L-alanine ligase (491 aa).

An ATP-binding site is contributed by 126-132 (GTHGKTT).

This sequence belongs to the MurCDEF family.

Its subcellular location is the cytoplasm. The enzyme catalyses UDP-N-acetyl-alpha-D-muramate + L-alanine + ATP = UDP-N-acetyl-alpha-D-muramoyl-L-alanine + ADP + phosphate + H(+). It participates in cell wall biogenesis; peptidoglycan biosynthesis. Its function is as follows. Cell wall formation. The chain is UDP-N-acetylmuramate--L-alanine ligase from Shigella boydii serotype 18 (strain CDC 3083-94 / BS512).